The chain runs to 313 residues: 3'-5' exoribonuclease YhaM (313 aa).

The OB DNA-binding region spans 22–90 (SSVKGTASNG…QLKIRQIRQA (69 aa)). The HD domain maps to 163–279 (HVVSMLRLAK…LHQIDLMDAS (117 aa)).

The protein belongs to the YhaM family.

Its function is as follows. Shows a 3'-5' exoribonuclease activity. This Listeria innocua serovar 6a (strain ATCC BAA-680 / CLIP 11262) protein is 3'-5' exoribonuclease YhaM.